We begin with the raw amino-acid sequence, 178 residues long: CDP-archaeol synthase (178 aa).

5 consecutive transmembrane segments (helical) span residues 3–23 (LLLLLFSAIWYILPAYVANAV), 56–76 (FFGILFGIITGILQHFIVILY), 87–107 (LFGYIILSFLLASGTLFGDML), 123–145 (APILDQITFIVFALLFAYPFYPL), and 150–169 (IVLLLVISPIIHFSSNIIAY).

Belongs to the CDP-archaeol synthase family. Mg(2+) is required as a cofactor.

Its subcellular location is the cell membrane. It carries out the reaction 2,3-bis-O-(geranylgeranyl)-sn-glycerol 1-phosphate + CTP + H(+) = CDP-2,3-bis-O-(geranylgeranyl)-sn-glycerol + diphosphate. It participates in membrane lipid metabolism; glycerophospholipid metabolism. In terms of biological role, catalyzes the formation of CDP-2,3-bis-(O-geranylgeranyl)-sn-glycerol (CDP-archaeol) from 2,3-bis-(O-geranylgeranyl)-sn-glycerol 1-phosphate (DGGGP) and CTP. This reaction is the third ether-bond-formation step in the biosynthesis of archaeal membrane lipids. This Methanococcus maripaludis (strain C6 / ATCC BAA-1332) protein is CDP-archaeol synthase.